The primary structure comprises 641 residues: Putative phagocytic receptor 1a (641 aa).

The N-terminal stretch at 1-23 is a signal peptide; it reads MKINKKQIVFFILFSIFLNHVNG. At 24-279 the chain is on the extracellular side; it reads IFYLPGMIPH…ESNDNSVHWF (256 aa). A helical membrane pass occupies residues 280-300; the sequence is SILNSLMIVFILTVMVAMIII. Topologically, residues 301-349 are cytoplasmic; it reads RTLKKDIRRYTSIDTSEDRDSQEETGWKMIHGDVFRPPSHPMLLSVCIG. The chain crosses the membrane as a helical span at residues 350–370; that stretch reads SGVQIFSMTLITMIFAVLGFL. The Extracellular portion of the chain corresponds to 371–374; the sequence is SPAN. The helical transmembrane segment at 375-395 threads the bilayer; that stretch reads IGGLATALIVLFVLSAMFAGY. The Cytoplasmic segment spans residues 396-413; the sequence is FSTRVFTIFKGRNWKKNT. Residues 414 to 434 form a helical membrane-spanning segment; that stretch reads IYTALSMPGIIFGIFFFVNMF. The Extracellular segment spans residues 435-445; it reads LRGAKSSAAVP. A helical transmembrane segment spans residues 446–466; sequence FGTFASIIAMWFGISVPLVFL. The Cytoplasmic segment spans residues 467–502; it reads GSYFASKKPVPEDPVRTNQIPRQVPDQIWYMNPYLS. The chain crosses the membrane as a helical span at residues 503–523; sequence ILMGGILPFGAVFIELHFILT. The Extracellular portion of the chain corresponds to 524–532; it reads SLWDNQFYY. The helical transmembrane segment at 533-553 threads the bilayer; sequence IFGFLFIVLMILIVTSAEISI. Residues 554 to 578 are Cytoplasmic-facing; sequence VMCYFQLCAEDHHWWWRSFLTAGSS. A helical membrane pass occupies residues 579–599; that stretch reads SLYMFIYSVSFFRYLGITKFI. The Extracellular segment spans residues 600 to 608; it reads SSLLDFSYS. The chain crosses the membrane as a helical span at residues 609 to 629; it reads FIMSLAFAALTGTIGFYSCYF. Topologically, residues 630-641 are cytoplasmic; it reads LVRKIYSSIHIN.

The protein belongs to the nonaspanin (TM9SF) (TC 9.A.2) family.

The protein resides in the membrane. Functionally, involved in adhesion, phagocytosis of hydrophilic particles and intracellular killing of bacteria. Associates with proteins harboring glycine-rich transmembrane domains and ensures their efficient localization to the cell surface. The chain is Putative phagocytic receptor 1a (phg1a) from Dictyostelium discoideum (Social amoeba).